The sequence spans 208 residues: 3-demethoxyubiquinol 3-hydroxylase (208 aa).

Fe cation is bound by residues glutamate 57, glutamate 87, histidine 90, glutamate 139, glutamate 171, and histidine 174.

This sequence belongs to the COQ7 family. Fe cation serves as cofactor.

Its subcellular location is the cell membrane. The enzyme catalyses a 5-methoxy-2-methyl-3-(all-trans-polyprenyl)benzene-1,4-diol + AH2 + O2 = a 3-demethylubiquinol + A + H2O. Its pathway is cofactor biosynthesis; ubiquinone biosynthesis. Its function is as follows. Catalyzes the hydroxylation of 2-nonaprenyl-3-methyl-6-methoxy-1,4-benzoquinol during ubiquinone biosynthesis. The protein is 3-demethoxyubiquinol 3-hydroxylase of Nitrosospira multiformis (strain ATCC 25196 / NCIMB 11849 / C 71).